The chain runs to 419 residues: MSLLAMGKAAREASFELAVAATARKNQALLAMAEELELQQDVILAANAKDIEAGRSSGLTDAMLDRLLLNESRLAGIVADVRKVVTLDDPVGSEIDSRVLENGMRLSRRRVPIGVIGVIYEARPNVTIDIAALCLKTGNASILRGGRETFNSNMALVKVIQAALAKTGLPAASVQYIESPDRALVSELLTMDQYVDMIIPRGGANLHRLCKDQSTIPVIIGGFGVSHLYVDESADLIRAIDVIDNAKVQRPSACNSLDTLLLNEKIAAEIVPALVARMNQQKVTLVAEPKAFALLQAAGAEQLRAAGAEDFDTEWLSLTLGVKVVADVKAAIAHLQEHNACHSDAILTNDLKCAEYFINAAGSAAVYVNASTRFTDGAQFGLGAEVAVSTQKLHARGPMGLTELTSYKWIGQADYLSRS.

It belongs to the gamma-glutamyl phosphate reductase family.

The protein localises to the cytoplasm. It carries out the reaction L-glutamate 5-semialdehyde + phosphate + NADP(+) = L-glutamyl 5-phosphate + NADPH + H(+). The protein operates within amino-acid biosynthesis; L-proline biosynthesis; L-glutamate 5-semialdehyde from L-glutamate: step 2/2. In terms of biological role, catalyzes the NADPH-dependent reduction of L-glutamate 5-phosphate into L-glutamate 5-semialdehyde and phosphate. The product spontaneously undergoes cyclization to form 1-pyrroline-5-carboxylate. The chain is Gamma-glutamyl phosphate reductase from Tolumonas auensis (strain DSM 9187 / NBRC 110442 / TA 4).